A 160-amino-acid chain; its full sequence is Cathelin-related peptide SC5 (160 aa).

The N-terminal stretch at 1-29 is a signal peptide; it reads METQRASLSLGRCSLWLLLLGLALPSASA. The propeptide occupies 30–131; sequence QVLSYREAVL…DITCAEPQSV (102 aa). Cystine bridges form between Cys-86–Cys-97 and Cys-108–Cys-125.

It belongs to the cathelicidin family.

It localises to the secreted. In terms of biological role, broad spectrum bactericidal agent. The polypeptide is Cathelin-related peptide SC5 (Ovis aries (Sheep)).